Here is a 106-residue protein sequence, read N- to C-terminus: YcgL domain-containing protein HCH_02617 (106 aa).

In terms of domain architecture, YcgL spans 6–90 (RLISIFRSSK…VQDDYMMDVV (85 aa)).

This chain is YcgL domain-containing protein HCH_02617, found in Hahella chejuensis (strain KCTC 2396).